A 152-amino-acid chain; its full sequence is Cytochrome c-type biogenesis protein CcmE (152 aa).

Residues 1-9 lie on the Cytoplasmic side of the membrane; the sequence is MRGLKKQRR. The helical; Signal-anchor for type II membrane protein transmembrane segment at 10–30 threads the bilayer; it reads IQILIVAAVALTLSSVLIGYA. The Periplasmic segment spans residues 31-152; it reads LRDGINFFRP…PDGYARDGDS (122 aa). Residues histidine 123 and tyrosine 127 each coordinate heme.

Belongs to the CcmE/CycJ family.

The protein localises to the cell inner membrane. Its function is as follows. Heme chaperone required for the biogenesis of c-type cytochromes. Transiently binds heme delivered by CcmC and transfers the heme to apo-cytochromes in a process facilitated by CcmF and CcmH. The sequence is that of Cytochrome c-type biogenesis protein CcmE from Jannaschia sp. (strain CCS1).